The primary structure comprises 245 residues: Complement C1q subcomponent subunit A (245 aa).

An N-terminal signal peptide occupies residues 1–22; that stretch reads METSQGWLVACVLTMTLVWTVA. The disordered stretch occupies residues 28 to 114; the sequence is APNGKDGAPG…NPGNIRDQPR (87 aa). The 79-residue stretch at 31–109 folds into the Collagen-like domain; the sequence is GKDGAPGNPG…KGVKGNPGNI (79 aa). Residues Pro-39 and Pro-45 each carry the 4-hydroxyproline modification. At Lys-48 the chain carries 5-hydroxylysine. An O-linked (Gal...) hydroxylysine; alternate glycan is attached at Lys-48. At Pro-54 the chain carries 4-hydroxyproline. A 5-hydroxylysine modification is found at Lys-67. Residue Lys-67 is glycosylated (O-linked (Gal...) hydroxylysine; alternate). 4-hydroxyproline is present on residues Pro-79 and Pro-85. The span at 79-99 shows a compositional bias: low complexity; that stretch reads PGNVGLPGPSGPLGDSGPQGL. The residue at position 100 (Lys-100) is a 5-hydroxylysine. O-linked (Gal...) hydroxylysine; alternate glycosylation occurs at Lys-100. One can recognise a C1q domain in the interval 110 to 245; sequence RDQPRPAFSA…FSGFLIFPSA (136 aa). N-linked (GlcNAc...) asparagine glycosylation occurs at Asn-146. Ca(2+) is bound at residue Gln-199.

In terms of assembly, core component of the complement C1 complex, a calcium-dependent complex composed of 1 molecule of the C1Q subcomplex, 2 molecules of C1R and 2 molecules of C1S. The C1Q subcomplex is composed 18 subunits: 3 chains of C1QA, C1QB, and C1QC trimerize to form 6 collagen-like triple helices connected to six globular ligand-recognition modules (C1q domain). Interacts with CR1 (via Sushi 24 and Sushi 25 domains). Interacts (via C-terminus) with CD33; this interaction activates CD33 inhibitory motifs. Post-translationally, O-linked glycans are assumed to be the Glc-Gal disaccharides typically found as secondary modifications of hydroxylated lysines in collagen-like domains.

The protein localises to the secreted. Its subcellular location is the cell surface. Its activity is regulated as follows. The C1Q subcomplex is inhibited by sulfated molecules, such as triterpenoid sulfates, heparan sulfate, or chondroitin sulfates. Core component of the complement C1 complex, a multiprotein complex that initiates the classical pathway of the complement system, a cascade of proteins that leads to phagocytosis and breakdown of pathogens and signaling that strengthens the adaptive immune system. The classical complement pathway is initiated by the C1Q subcomplex of the C1 complex, which specifically binds IgG or IgM immunoglobulins complexed with antigens, forming antigen-antibody complexes on the surface of pathogens: C1QA, together with C1QB and C1QC, specifically recognizes and binds the Fc regions of IgG or IgM via its C1q domain. Immunoglobulin-binding activates the proenzyme C1R, which cleaves C1S, initiating the proteolytic cascade of the complement system. The C1Q subcomplex is activated by a hexamer of IgG complexed with antigens, while it is activated by a pentameric IgM. The C1Q subcomplex also recognizes and binds phosphatidylserine exposed on the surface of cells undergoing programmed cell death, possibly promoting activation of the complement system. The polypeptide is Complement C1q subcomponent subunit A (Mus musculus (Mouse)).